A 522-amino-acid chain; its full sequence is Major facilitator-type transporter sorT (522 aa).

A disordered region spans residues 1-21; sequence MSHTEPKAPVNTGEVENGHLY. 12 consecutive transmembrane segments (helical) span residues 52 to 72, 89 to 109, 121 to 141, 143 to 163, 183 to 203, 211 to 231, 280 to 300, 324 to 344, 366 to 386, 395 to 415, 427 to 447, and 457 to 477; these read WFIA…SSAY, VFIV…AVWA, QILW…SAGS, NVAT…SPLV, TIYC…GGFV, WVQG…IVFI, WIFL…AIIY, IGGL…VYAI, LPPA…FAWT, VSII…LPIM, ASVL…FPLF, and IHWA…FPLI.

Belongs to the major facilitator superfamily. Sugar transporter (TC 2.A.1.1) family.

Its subcellular location is the membrane. Major facilitator-type transporter; part of the gene cluster that mediates the biosynthesis of sorbicillinoids, a diverse group of yellow secondary metabolites that restrict growth of competing pathogenic fungi but not of bacteria. In Penicillium rubens (strain ATCC 28089 / DSM 1075 / NRRL 1951 / Wisconsin 54-1255) (Penicillium chrysogenum), this protein is Major facilitator-type transporter sorT.